We begin with the raw amino-acid sequence, 432 residues long: Adenylosuccinate synthetase (432 aa).

GTP is bound by residues 13 to 19 and 41 to 43; these read GDEGKGK and GHT. D14 (proton acceptor) is an active-site residue. Mg(2+)-binding residues include D14 and G41. IMP-binding positions include 14 to 17, 39 to 42, T130, R144, Q225, T240, and R304; these read DEGK and NAGH. Residue H42 is the Proton donor of the active site. 300–306 is a substrate binding site; sequence ATTGRRR. Residues R306, 332 to 334, and 415 to 417 contribute to the GTP site; these read KLD and STG.

This sequence belongs to the adenylosuccinate synthetase family. In terms of assembly, homodimer. Mg(2+) serves as cofactor.

It is found in the cytoplasm. It carries out the reaction IMP + L-aspartate + GTP = N(6)-(1,2-dicarboxyethyl)-AMP + GDP + phosphate + 2 H(+). It functions in the pathway purine metabolism; AMP biosynthesis via de novo pathway; AMP from IMP: step 1/2. Its function is as follows. Plays an important role in the de novo pathway of purine nucleotide biosynthesis. Catalyzes the first committed step in the biosynthesis of AMP from IMP. In Erwinia tasmaniensis (strain DSM 17950 / CFBP 7177 / CIP 109463 / NCPPB 4357 / Et1/99), this protein is Adenylosuccinate synthetase.